We begin with the raw amino-acid sequence, 243 residues long: Ribonuclease 3 (243 aa).

The RNase III domain occupies 10 to 146; sequence VNRFRKRFDT…FIGALYLDQG (137 aa). Glu59 provides a ligand contact to Mg(2+). Asp63 is an active-site residue. Asp132 and Glu135 together coordinate Mg(2+). Glu135 is a catalytic residue. The 70-residue stretch at 172–241 folds into the DRBM domain; sequence DFKTQFQEYV…AESAYKQLKQ (70 aa). Over residues 219-231 the composition is skewed to basic and acidic residues; it reads GKGKTKKESEQRA. Positions 219–243 are disordered; it reads GKGKTKKESEQRAAESAYKQLKQIK.

The protein belongs to the ribonuclease III family. In terms of assembly, homodimer. The cofactor is Mg(2+).

It is found in the cytoplasm. It carries out the reaction Endonucleolytic cleavage to 5'-phosphomonoester.. Digests double-stranded RNA. Involved in the processing of primary rRNA transcript to yield the immediate precursors to the large and small rRNAs (23S and 16S). Processes some mRNAs, and tRNAs when they are encoded in the rRNA operon. Processes pre-crRNA and tracrRNA of type II CRISPR loci if present in the organism. This Staphylococcus aureus (strain USA300) protein is Ribonuclease 3.